The following is a 249-amino-acid chain: MYSLNPSQIEASNLLYQVSSVEVGKHLYWQLGMFQVHGQVLITSWVVMAIIIITSVIASRNLQPIPSGTQNFLEYVLEFIRDLTKTQVGEEEYRSWVPFVGTLFLFIFISNWSGALIPWRLIELPSGELAAPTNDINTTVALALLTSVAYFYAGLSKKGLSYFGKYIQPTPILLPINILEDFTKPLSLSFRLFGNILADELVVAVLISLVPLVIPVPMMLLGLFTSGIQALIFATLAAAYIGESLEGHH.

The next 5 membrane-spanning stretches (helical) occupy residues 38-58, 97-117, 136-156, 201-221, and 222-242; these read GQVL…SVIA, VPFV…GALI, INTT…AGLS, LVVA…MMLL, and GLFT…AYIG.

It belongs to the ATPase A chain family. In terms of assembly, F-type ATPases have 2 components, CF(1) - the catalytic core - and CF(0) - the membrane proton channel. CF(1) has five subunits: alpha(3), beta(3), gamma(1), delta(1), epsilon(1). CF(0) has four main subunits: a, b, b' and c.

The protein resides in the plastid. It is found in the chloroplast thylakoid membrane. Its function is as follows. Key component of the proton channel; it plays a direct role in the translocation of protons across the membrane. This chain is ATP synthase subunit a, chloroplastic, found in Chlorokybus atmophyticus (Soil alga).